A 139-amino-acid chain; its full sequence is Acidic phospholipase A2 Tgc-E6 (139 aa).

A signal peptide spans 1–16; that stretch reads MRTLWIMAVLLLGVEG. Disulfide bonds link cysteine 42-cysteine 132, cysteine 44-cysteine 60, cysteine 59-cysteine 111, cysteine 65-cysteine 139, cysteine 66-cysteine 104, cysteine 73-cysteine 97, and cysteine 91-cysteine 102. Ca(2+) is bound by residues tyrosine 43, glycine 45, and glycine 47. The active site involves histidine 63. Aspartate 64 is a binding site for Ca(2+). Aspartate 105 is an active-site residue.

This sequence belongs to the phospholipase A2 family. Group II subfamily. D49 sub-subfamily. Monomer. The cofactor is Ca(2+). In terms of tissue distribution, expressed by the venom gland.

It is found in the secreted. It carries out the reaction a 1,2-diacyl-sn-glycero-3-phosphocholine + H2O = a 1-acyl-sn-glycero-3-phosphocholine + a fatty acid + H(+). Snake venom phospholipase A2 (PLA2) that inhibits the ADP-(IC(50)=272 nM) and collagen-induced (IC(50)=518 nM) human platelet aggregation in platelet rich plasma. Exhibits very high hydrolytic activities toward the synthetic lecithin, and prefers the anionic micelles (dPPC with deoxycholate) to the zwitterionic micelles (dPPC with Triton X-100). PLA2 catalyzes the calcium-dependent hydrolysis of the 2-acyl groups in 3-sn-phosphoglycerides. The chain is Acidic phospholipase A2 Tgc-E6 from Trimeresurus gracilis (Kikuchi habu).